A 39-amino-acid chain; its full sequence is ATYYGNGLYCNKQKHYTWVDWNKASREIGKITVNGWVQH.

This sequence belongs to the bacteriocin class IIA/YGNGV family.

Its subcellular location is the secreted. Functionally, bacteriocin with antibacterial activity against C.jejuni. The sequence is that of Bacteriocin SRCAM 602 from Paenibacillus polymyxa (Bacillus polymyxa).